Consider the following 705-residue polypeptide: Polyribonucleotide nucleotidyltransferase (705 aa).

2 residues coordinate Mg(2+): Asp486 and Asp492. The KH domain maps to 553-612 (PRIYTMKINPEKIKDVIGKGGSVIRALTDETGTTIEIEDDGTIKIAATDGDKAKHAIRRI). Residues 622–690 (GRIYAGKVTR…RQGRIRLSIK (69 aa)) enclose the S1 motif domain.

This sequence belongs to the polyribonucleotide nucleotidyltransferase family. In terms of assembly, component of the RNA degradosome, which is a multiprotein complex involved in RNA processing and mRNA degradation. The cofactor is Mg(2+).

The protein localises to the cytoplasm. The catalysed reaction is RNA(n+1) + phosphate = RNA(n) + a ribonucleoside 5'-diphosphate. Its function is as follows. Involved in mRNA degradation. Catalyzes the phosphorolysis of single-stranded polyribonucleotides processively in the 3'- to 5'-direction. The chain is Polyribonucleotide nucleotidyltransferase from Yersinia pseudotuberculosis serotype O:3 (strain YPIII).